We begin with the raw amino-acid sequence, 232 residues long: Ubiquinone biosynthesis O-methyltransferase (232 aa).

Positions 36, 55, 76, and 120 each coordinate S-adenosyl-L-methionine.

The protein belongs to the methyltransferase superfamily. UbiG/COQ3 family.

It catalyses the reaction a 3-demethylubiquinol + S-adenosyl-L-methionine = a ubiquinol + S-adenosyl-L-homocysteine + H(+). It carries out the reaction a 3-(all-trans-polyprenyl)benzene-1,2-diol + S-adenosyl-L-methionine = a 2-methoxy-6-(all-trans-polyprenyl)phenol + S-adenosyl-L-homocysteine + H(+). It participates in cofactor biosynthesis; ubiquinone biosynthesis. Its function is as follows. O-methyltransferase that catalyzes the 2 O-methylation steps in the ubiquinone biosynthetic pathway. The sequence is that of Ubiquinone biosynthesis O-methyltransferase from Pseudomonas aeruginosa (strain LESB58).